The chain runs to 380 residues: MNPPVEANIRKTALNATHRQSGAKMVDYSGWDMPVEYPSVGGLMKEHLAVRAGVGLFDVSHMGDIRVHGPEALKAVQYLTMNDASKLNTGQAQYSAMLYPNGTFVDDVIVHKFADDDYLLVINAGTREKDVNWVKDNTRQFKVTVEDLSDQFTQIAIQGPKGVDTLQKLTDVDLSKVKFYWFTRGTVAGLKNVLIARTGYTAEDGFEIYIPSDAATSDRVWNELLQAGKEFGVVPAGLGSRNTLRLEGKLPLYGHEISDEINVWEAGLDRFLKMDKGDFIGRAALEKAKNDGVKRALVGLETIERGIPRDGYKVLDLEGKEIGYVTSGSYMPFLKRNLALAYVPVEQSALDNIVAVEIRNQPVKAKVVPSQFYKRPKKSS.

The protein belongs to the GcvT family. The glycine cleavage system is composed of four proteins: P, T, L and H.

The enzyme catalyses N(6)-[(R)-S(8)-aminomethyldihydrolipoyl]-L-lysyl-[protein] + (6S)-5,6,7,8-tetrahydrofolate = N(6)-[(R)-dihydrolipoyl]-L-lysyl-[protein] + (6R)-5,10-methylene-5,6,7,8-tetrahydrofolate + NH4(+). In terms of biological role, the glycine cleavage system catalyzes the degradation of glycine. The polypeptide is Aminomethyltransferase (Koribacter versatilis (strain Ellin345)).